Here is a 722-residue protein sequence, read N- to C-terminus: Polyribonucleotide nucleotidyltransferase (722 aa).

Mg(2+) contacts are provided by D495 and D501. A KH domain is found at 562-621 (PRLLSFRIDPELIGTVIGPGGRTIKGITERTNTKIDIEDGGIVTIASHDGAAAEEAQRII). One can recognise an S1 motif domain in the interval 631–699 (GEIFPGSITR…NRGRINLTLR (69 aa)). The segment at 700 to 722 (GVSQNGGMSNYPEPTPTPVAPLT) is disordered. A compositionally biased stretch (pro residues) spans 712 to 722 (EPTPTPVAPLT).

This sequence belongs to the polyribonucleotide nucleotidyltransferase family. Mg(2+) is required as a cofactor.

The protein resides in the cytoplasm. The enzyme catalyses RNA(n+1) + phosphate = RNA(n) + a ribonucleoside 5'-diphosphate. Involved in mRNA degradation. Catalyzes the phosphorolysis of single-stranded polyribonucleotides processively in the 3'- to 5'-direction. This is Polyribonucleotide nucleotidyltransferase from Prochlorococcus marinus (strain NATL1A).